An 80-amino-acid chain; its full sequence is Conotoxin Bu3 (80 aa).

The signal sequence occupies residues 1-22 (MKLMCVLIVSVLVLTACQLSTA). Residues 23–51 (DDTRDKQKDRLVRLFRKKRDSSDSGLLPR) constitute a propeptide that is removed on maturation. 3 disulfide bridges follow: C53–C69, C60–C72, and C68–C79.

Belongs to the conotoxin O1 superfamily. Expressed by the venom duct.

It localises to the secreted. In Conus bullatus (Bubble cone), this protein is Conotoxin Bu3.